Consider the following 272-residue polypeptide: Phosphatidylglycerol--prolipoprotein diacylglyceryl transferase (272 aa).

4 helical membrane passes run Trp-24 to Ala-44, Tyr-59 to Tyr-79, Phe-102 to Phe-122, and Gly-129 to Phe-149. A 1,2-diacyl-sn-glycero-3-phospho-(1'-sn-glycerol) is bound at residue Arg-151. 3 helical membrane-spanning segments follow: residues Pro-180 to Trp-200, Gly-208 to Trp-228, and Met-244 to Ala-264.

Belongs to the Lgt family.

Its subcellular location is the cell inner membrane. The enzyme catalyses L-cysteinyl-[prolipoprotein] + a 1,2-diacyl-sn-glycero-3-phospho-(1'-sn-glycerol) = an S-1,2-diacyl-sn-glyceryl-L-cysteinyl-[prolipoprotein] + sn-glycerol 1-phosphate + H(+). It participates in protein modification; lipoprotein biosynthesis (diacylglyceryl transfer). Its function is as follows. Catalyzes the transfer of the diacylglyceryl group from phosphatidylglycerol to the sulfhydryl group of the N-terminal cysteine of a prolipoprotein, the first step in the formation of mature lipoproteins. In Wolinella succinogenes (strain ATCC 29543 / DSM 1740 / CCUG 13145 / JCM 31913 / LMG 7466 / NCTC 11488 / FDC 602W) (Vibrio succinogenes), this protein is Phosphatidylglycerol--prolipoprotein diacylglyceryl transferase.